A 425-amino-acid chain; its full sequence is Serine--tRNA ligase (425 aa).

Residue 229–231 (TSE) participates in L-serine binding. ATP is bound by residues 259-261 (RKE) and Val-275. Glu-282 is a binding site for L-serine. Residue 349-352 (EVTS) coordinates ATP. An L-serine-binding site is contributed by Thr-384.

The protein belongs to the class-II aminoacyl-tRNA synthetase family. Type-1 seryl-tRNA synthetase subfamily. Homodimer. The tRNA molecule binds across the dimer.

It is found in the cytoplasm. It carries out the reaction tRNA(Ser) + L-serine + ATP = L-seryl-tRNA(Ser) + AMP + diphosphate + H(+). It catalyses the reaction tRNA(Sec) + L-serine + ATP = L-seryl-tRNA(Sec) + AMP + diphosphate + H(+). It participates in aminoacyl-tRNA biosynthesis; selenocysteinyl-tRNA(Sec) biosynthesis; L-seryl-tRNA(Sec) from L-serine and tRNA(Sec): step 1/1. Catalyzes the attachment of serine to tRNA(Ser). Is also able to aminoacylate tRNA(Sec) with serine, to form the misacylated tRNA L-seryl-tRNA(Sec), which will be further converted into selenocysteinyl-tRNA(Sec). The protein is Serine--tRNA ligase of Borreliella burgdorferi (strain ATCC 35210 / DSM 4680 / CIP 102532 / B31) (Borrelia burgdorferi).